An 816-amino-acid chain; its full sequence is H(+)/Cl(-) exchange transporter 5 (816 aa).

The interval 1-26 (MAMWQGAMDNRGFQQGSFSSFQNSSS) is disordered. Residues 1 to 124 (MAMWQGAMDN…WALIHSVSDA (124 aa)) are Cytoplasmic-facing. Low complexity predominate over residues 12 to 25 (GFQQGSFSSFQNSS). The next 2 helical transmembrane spans lie at 125–162 (FSGW…ICTG) and 208–231 (VNYF…VKVF). The Selectivity filter part_1 motif lies at 237–241 (GSGIP). Ser238 is a chloride binding site. Positions 240-247 (IPEIKTIL) form an intramembrane region, helical. Helical transmembrane passes span 256–275 (LGKW…VSSG) and 281–300 (EGPL…HCFN). A Selectivity filter part_2 motif is present at residues 279–283 (GKEGP). 2 intramembrane regions (helical) span residues 312–324 (VLSA…VSVA) and 328–336 (PIGGVLFSL). The next 5 helical transmembrane spans lie at 348-366 (LWRS…RSIN), 389-415 (LVPF…AWCR), 422-442 (LGKY…ILAF), 498-518 (MWQL…TFGM), and 523-542 (GLFI…LGVG). Residues 523-527 (GLFIP) carry the Selectivity filter part_3 motif. Position 525 (Phe525) interacts with chloride. An intramembrane region (helical) is located at residues 570 to 584 (GLYAMVGAAACLGGV). An intramembrane region (note=Loop between two helices) is located at residues 585–587 (TRM). The segment at residues 588–599 (TVSLVVIMFELT) is an intramembrane region (helical). The segment at residues 600–604 (GGLEY) is an intramembrane region (note=Loop between two helices). The chain crosses the membrane as a helical span at residues 605-622 (IVPLMAAAMTSKWVADAL). Over 623-816 (GREGIYDAHI…NQDPDSILFN (194 aa)) the chain is Cytoplasmic. Chloride is bound at residue Tyr628. 2 consecutive CBS domains span residues 656–720 (MKPR…ARKK) and 752–812 (ILDL…DPDS). Residues Thr666, 687–689 (YSG), and 794–797 (TKKD) each bind ATP.

This sequence belongs to the chloride channel (TC 2.A.49) family. ClC-5/CLCN5 subfamily. Interacts with NEDD4 and NEDD4L. Ubiquitinated by NEDD4L in the presence of albumin; which promotes endocytosis and proteasomal degradation. Kidney. Moderately expressed in aortic vascular smooth muscle and endothelial cells, and at a slightly higher level in the coronary vascular smooth muscle.

The protein localises to the golgi apparatus membrane. It localises to the endosome membrane. Its subcellular location is the cell membrane. The catalysed reaction is 2 chloride(in) + H(+)(out) = 2 chloride(out) + H(+)(in). Its function is as follows. Proton-coupled chloride transporter. Functions as antiport system and exchanges chloride ions against protons. Important for normal acidification of the endosome lumen. May play an important role in renal tubular function. The CLC channel family contains both chloride channels and proton-coupled anion transporters that exchange chloride or another anion for protons. The absence of conserved gating glutamate residues is typical for family members that function as channels. This Homo sapiens (Human) protein is H(+)/Cl(-) exchange transporter 5.